Reading from the N-terminus, the 498-residue chain is ATP synthase subunit beta, chloroplastic (498 aa).

172-179 (GGAGVGKT) serves as a coordination point for ATP.

This sequence belongs to the ATPase alpha/beta chains family. F-type ATPases have 2 components, CF(1) - the catalytic core - and CF(0) - the membrane proton channel. CF(1) has five subunits: alpha(3), beta(3), gamma(1), delta(1), epsilon(1). CF(0) has four main subunits: a(1), b(1), b'(1) and c(9-12).

Its subcellular location is the plastid. The protein resides in the chloroplast thylakoid membrane. The enzyme catalyses ATP + H2O + 4 H(+)(in) = ADP + phosphate + 5 H(+)(out). Functionally, produces ATP from ADP in the presence of a proton gradient across the membrane. The catalytic sites are hosted primarily by the beta subunits. This Coffea arabica (Arabian coffee) protein is ATP synthase subunit beta, chloroplastic.